Consider the following 398-residue polypeptide: 1-deoxy-D-xylulose 5-phosphate reductoisomerase (398 aa).

NADPH contacts are provided by threonine 10, glycine 11, serine 12, isoleucine 13, glycine 36, lysine 37, asparagine 38, and asparagine 124. Residue lysine 125 participates in 1-deoxy-D-xylulose 5-phosphate binding. NADPH is bound at residue glutamate 126. A Mn(2+)-binding site is contributed by aspartate 150. Positions 151, 152, 186, and 209 each coordinate 1-deoxy-D-xylulose 5-phosphate. Glutamate 152 is a binding site for Mn(2+). Position 215 (glycine 215) interacts with NADPH. Positions 222, 227, 228, and 231 each coordinate 1-deoxy-D-xylulose 5-phosphate. Glutamate 231 is a binding site for Mn(2+).

This sequence belongs to the DXR family. Homodimer. Requires Mg(2+) as cofactor. Mn(2+) is required as a cofactor.

It carries out the reaction 2-C-methyl-D-erythritol 4-phosphate + NADP(+) = 1-deoxy-D-xylulose 5-phosphate + NADPH + H(+). Its pathway is isoprenoid biosynthesis; isopentenyl diphosphate biosynthesis via DXP pathway; isopentenyl diphosphate from 1-deoxy-D-xylulose 5-phosphate: step 1/6. In terms of biological role, catalyzes the NADPH-dependent rearrangement and reduction of 1-deoxy-D-xylulose-5-phosphate (DXP) to 2-C-methyl-D-erythritol 4-phosphate (MEP). This is 1-deoxy-D-xylulose 5-phosphate reductoisomerase from Shigella flexneri.